Reading from the N-terminus, the 310-residue chain is Beta-ketoacyl-[acyl-carrier-protein] synthase III (310 aa).

Catalysis depends on residues C112 and H235. Residues 236–240 form an ACP-binding region; that stretch reads QANIR. N265 is a catalytic residue.

This sequence belongs to the thiolase-like superfamily. FabH family. Homodimer.

Its subcellular location is the cytoplasm. It catalyses the reaction malonyl-[ACP] + acetyl-CoA + H(+) = 3-oxobutanoyl-[ACP] + CO2 + CoA. It participates in lipid metabolism; fatty acid biosynthesis. Its function is as follows. Catalyzes the condensation reaction of fatty acid synthesis by the addition to an acyl acceptor of two carbons from malonyl-ACP. Catalyzes the first condensation reaction which initiates fatty acid synthesis and may therefore play a role in governing the total rate of fatty acid production. Possesses both acetoacetyl-ACP synthase and acetyl transacylase activities. Its substrate specificity determines the biosynthesis of branched-chain and/or straight-chain of fatty acids. In Geobacillus kaustophilus (strain HTA426), this protein is Beta-ketoacyl-[acyl-carrier-protein] synthase III.